The following is a 123-amino-acid chain: Small ribosomal subunit protein uS12 (123 aa).

At Asp-89 the chain carries 3-methylthioaspartic acid. Residues 104-123 form a disordered region; it reads SVGVKDRKKSRSKYGAKRPK. Basic residues predominate over residues 109–123; the sequence is DRKKSRSKYGAKRPK.

The protein belongs to the universal ribosomal protein uS12 family. Part of the 30S ribosomal subunit. Contacts proteins S8 and S17. May interact with IF1 in the 30S initiation complex.

In terms of biological role, with S4 and S5 plays an important role in translational accuracy. Functionally, interacts with and stabilizes bases of the 16S rRNA that are involved in tRNA selection in the A site and with the mRNA backbone. Located at the interface of the 30S and 50S subunits, it traverses the body of the 30S subunit contacting proteins on the other side and probably holding the rRNA structure together. The combined cluster of proteins S8, S12 and S17 appears to hold together the shoulder and platform of the 30S subunit. The chain is Small ribosomal subunit protein uS12 from Pelobacter propionicus (strain DSM 2379 / NBRC 103807 / OttBd1).